The sequence spans 376 residues: tRNA-specific 2-thiouridylase MnmA (376 aa).

ATP contacts are provided by residues 16–23 and leucine 42; that span reads AMSGGVDS. Catalysis depends on cysteine 111, which acts as the Nucleophile. Cysteines 111 and 210 form a disulfide. Glycine 135 contributes to the ATP binding site. The tract at residues 158–160 is interaction with tRNA; it reads KDQ. Residue cysteine 210 is the Cysteine persulfide intermediate of the active site.

Belongs to the MnmA/TRMU family.

The protein localises to the cytoplasm. It catalyses the reaction S-sulfanyl-L-cysteinyl-[protein] + uridine(34) in tRNA + AH2 + ATP = 2-thiouridine(34) in tRNA + L-cysteinyl-[protein] + A + AMP + diphosphate + H(+). Functionally, catalyzes the 2-thiolation of uridine at the wobble position (U34) of tRNA, leading to the formation of s(2)U34. The protein is tRNA-specific 2-thiouridylase MnmA of Streptomyces avermitilis (strain ATCC 31267 / DSM 46492 / JCM 5070 / NBRC 14893 / NCIMB 12804 / NRRL 8165 / MA-4680).